A 186-amino-acid chain; its full sequence is Potassium-transporting ATPase KdpC subunit (186 aa).

A helical transmembrane segment spans residues 10-30; it reads LTIITMVLCGFLFPLAITLIG.

Belongs to the KdpC family. The system is composed of three essential subunits: KdpA, KdpB and KdpC.

Its subcellular location is the cell membrane. Its function is as follows. Part of the high-affinity ATP-driven potassium transport (or Kdp) system, which catalyzes the hydrolysis of ATP coupled with the electrogenic transport of potassium into the cytoplasm. This subunit acts as a catalytic chaperone that increases the ATP-binding affinity of the ATP-hydrolyzing subunit KdpB by the formation of a transient KdpB/KdpC/ATP ternary complex. This is Potassium-transporting ATPase KdpC subunit from Staphylococcus aureus (strain MRSA252).